The following is a 606-amino-acid chain: Elongation factor 4 (606 aa).

The region spanning 10–192 (ENIRNFSIIA…AIVQQLPAPK (183 aa)) is the tr-type G domain. Residues 22–27 (DHGKST) and 139–142 (NKID) each bind GTP.

The protein belongs to the TRAFAC class translation factor GTPase superfamily. Classic translation factor GTPase family. LepA subfamily.

The protein resides in the cell membrane. It catalyses the reaction GTP + H2O = GDP + phosphate + H(+). Its function is as follows. Required for accurate and efficient protein synthesis under certain stress conditions. May act as a fidelity factor of the translation reaction, by catalyzing a one-codon backward translocation of tRNAs on improperly translocated ribosomes. Back-translocation proceeds from a post-translocation (POST) complex to a pre-translocation (PRE) complex, thus giving elongation factor G a second chance to translocate the tRNAs correctly. Binds to ribosomes in a GTP-dependent manner. The chain is Elongation factor 4 from Lawsonia intracellularis (strain PHE/MN1-00).